The primary structure comprises 157 residues: 2-C-methyl-D-erythritol 2,4-cyclodiphosphate synthase (157 aa).

Residues Asp-9 and His-11 each coordinate a divalent metal cation. 4-CDP-2-C-methyl-D-erythritol 2-phosphate-binding positions include 9 to 11 (DVH) and 35 to 36 (HS). An a divalent metal cation-binding site is contributed by His-43. 4-CDP-2-C-methyl-D-erythritol 2-phosphate-binding positions include 57–59 (DIG), 62–66 (FPDTD), 101–107 (AEKPKMA), 133–136 (TTTE), Phe-140, and Arg-143.

This sequence belongs to the IspF family. As to quaternary structure, homotrimer. It depends on a divalent metal cation as a cofactor.

The enzyme catalyses 4-CDP-2-C-methyl-D-erythritol 2-phosphate = 2-C-methyl-D-erythritol 2,4-cyclic diphosphate + CMP. It participates in isoprenoid biosynthesis; isopentenyl diphosphate biosynthesis via DXP pathway; isopentenyl diphosphate from 1-deoxy-D-xylulose 5-phosphate: step 4/6. Functionally, involved in the biosynthesis of isopentenyl diphosphate (IPP) and dimethylallyl diphosphate (DMAPP), two major building blocks of isoprenoid compounds. Catalyzes the conversion of 4-diphosphocytidyl-2-C-methyl-D-erythritol 2-phosphate (CDP-ME2P) to 2-C-methyl-D-erythritol 2,4-cyclodiphosphate (ME-CPP) with a corresponding release of cytidine 5-monophosphate (CMP). The polypeptide is 2-C-methyl-D-erythritol 2,4-cyclodiphosphate synthase (Listeria monocytogenes serotype 4b (strain F2365)).